A 292-amino-acid chain; its full sequence is MFTGSIVALVTPMDEKGNVSRSCLKKLIDYHVANGTSAIVSVGTTGESATLSHDEHGDVVMMTLELADGRIPVIAGTGANATAEAISLTQRFNDSGIVGCLTVTPYYNRPTQEGLFQHFKAIAEHTDLPQILYNVPSRTGCDMLPETVGRLAEIKNIIAIKEATGNLTRVHQIKELVSDDFILLSGDDASALDFMQLGGHGVISVTANVAAREMADMCKLAAEGQFAEARAINQRLMPLHNKLFVEPNPIPVKWACKALGLVATDTLRLPMTPITDHGRDIVKAALQHAGLL.

A pyruvate-binding site is contributed by Thr45. Tyr133 (proton donor/acceptor) is an active-site residue. The active-site Schiff-base intermediate with substrate is Lys161. Ile203 contributes to the pyruvate binding site.

This sequence belongs to the DapA family. As to quaternary structure, homotetramer; dimer of dimers.

The protein resides in the cytoplasm. It catalyses the reaction L-aspartate 4-semialdehyde + pyruvate = (2S,4S)-4-hydroxy-2,3,4,5-tetrahydrodipicolinate + H2O + H(+). The protein operates within amino-acid biosynthesis; L-lysine biosynthesis via DAP pathway; (S)-tetrahydrodipicolinate from L-aspartate: step 3/4. Catalyzes the condensation of (S)-aspartate-beta-semialdehyde [(S)-ASA] and pyruvate to 4-hydroxy-tetrahydrodipicolinate (HTPA). The sequence is that of 4-hydroxy-tetrahydrodipicolinate synthase from Salmonella paratyphi A (strain AKU_12601).